The following is a 979-amino-acid chain: Receptor-type tyrosine-protein phosphatase-like N (979 aa).

The N-terminal stretch at 1–37 (MRRPRRPGGSGGSGGSGGLRLLVCLLLLSGRPGGCSA) is a signal peptide. The RESP18 homology domain stretch occupies residues 38–134 (ISAHGCLFDR…HPRDRSGLVP (97 aa)). Over 38–575 (ISAHGCLFDR…RQAHGISPMR (538 aa)) the chain is Lumenal. Residues Cys56 and Cys65 are joined by a disulfide bond. The span at 113 to 130 (MERIPRLRPPEPHPRDRS) shows a compositional bias: basic and acidic residues. 3 disordered regions span residues 113–173 (MERI…GSPL), 289–330 (GRAR…AAQP), and 392–443 (MQRG…SSSV). Positions 145–155 (TQGNPTGSSPA) are enriched in polar residues. The segment covering 303-322 (RAEDSSEGHEEEVLGGRGEK) has biased composition (basic and acidic residues). 2 positions are modified to phosphoserine: Ser307 and Ser308. Positions 414 to 424 (SPASSEVQQVL) are enriched in polar residues. The sufficient for dimerization of proICA512 stretch occupies residues 449–575 (SPLGQSQPTV…RQAHGISPMR (127 aa)). Residues Asn506 and Asn524 are each glycosylated (N-linked (GlcNAc...) asparagine). Residues 576 to 600 (SVLLTLVALAGVAGLLVALAVALCM) traverse the membrane as a helical segment. The segment at 601–732 (RHHSRQRDKE…PNTCAAAQDE (132 aa)) is sufficient for dimerization of proICA512. Residues 601-979 (RHHSRQRDKE…VNAILKALPQ (379 aa)) are Cytoplasmic-facing. The segment at 644–680 (RAEGQPEPSRVSSVSSQFSDAAQASPSSHSSTPSWCE) is disordered. Over residues 648–677 (QPEPSRVSSVSSQFSDAAQASPSSHSSTPS) the composition is skewed to low complexity. The Tyrosine-protein phosphatase domain occupies 709–969 (LAKEWQALCA…EFALTAVAEE (261 aa)). Lys754 is covalently cross-linked (Glycyl lysine isopeptide (Lys-Gly) (interchain with G-Cter in SUMO)).

It belongs to the protein-tyrosine phosphatase family. Receptor class 8 subfamily. As to quaternary structure, homodimer; shown for the unprocessed protein (proICA512) in the endoplasmic reticulum and resolved during protein maturation as ICA512-TMF seems to be predominantly monomeric in secretory granules; however, ICA512-CCF interacts with ICA512-TMF disrupting the ICA512-TMF:SNTB2 complex. The isolated lumenal RESP18 homology domain has been shown to form disulfide-linked homooligomers. Interacts (via cytoplasmic domain) with phosphorylated SNTB2; this protects PTPRN against cleavage by CAPN1 to produce ICA512-CCF. Dephosphorylation of SNTB2 upon insulin stimulation disrupts the interaction and results in PTPRN cleavage. Interacts with SNX19. ICA512-CCF interacts with PIAS4; in the nucleus. Interacts with STAT5B (phosphorylated); down-regulated by ICA512-CCF sumoylation; ICA512-CCF prevents STAT5B dephosphorylation; ICA512-CCF mediates interaction of STAT5B with PIAS4. Interacts (via RESP18 homology domain) with insulin and proinsulin. Interacts with PTPRN2, PTPRA and PTPRE. Subject to proteolytic cleavage at multiple sites. Subject to cleavage on a pair of basic residues. On exocytosis of secretory granules in pancreatic beta-cells ICA512-TMF is transiently inserted in the plasma-membrane and cleaved by mu-type calpain CPN1 to yield ICA512-CCF. In terms of processing, O-glycosylated. Post-translationally, N-glycosylated. Sumoylated at two sites including Lys-754. Sumoylation decreases interaction with STAT5. In terms of tissue distribution, detected in pituitary. Detected in brain (at protein level). Detected in brain. Weakly expressed in the colon, intestine, stomach and pancreas.

It localises to the membrane. It is found in the cytoplasmic vesicle. The protein resides in the secretory vesicle membrane. The protein localises to the perikaryon. Its subcellular location is the cell projection. It localises to the axon. It is found in the synapse. The protein resides in the cell membrane. The protein localises to the endosome. Its subcellular location is the nucleus. In terms of biological role, plays a role in vesicle-mediated secretory processes. Required for normal accumulation of secretory vesicles in hippocampus, pituitary and pancreatic islets. Required for the accumulation of normal levels of insulin-containing vesicles and preventing their degradation. Plays a role in insulin secretion in response to glucose stimuli. Required for normal accumulation of the neurotransmitters norepinephrine, dopamine and serotonin in the brain. In females, but not in males, required for normal accumulation and secretion of pituitary hormones, such as luteinizing hormone (LH) and follicle-stimulating hormone (FSH). Seems to lack intrinsic enzyme activity. Required to maintain normal levels of renin expression and renin release. May regulate catalytic active protein-tyrosine phosphatases such as PTPRA through dimerization. Functionally, ICA512-TMF regulates dynamics and exocytosis of insulin secretory granules (SGs); binding of ICA512-TMF to SNTB2/beta-2-syntrophin is proposed to restrain SGs mobility and exocytosis by tethering them to the actin cytoskeleton depending on UTRN; the function is inhibited by cytoplasmic ICA512-CFF dimerizing with ICA512-TMF and displacing SNTB2. ICA512-CCF translocated to the nucleus promotes expression of insulin and other granule-related genes; the function implicates binding to and regulating activity of STAT5B probably by preventing its dephosphorylation and potentially by inducing its sumoylation by recruiting PIAS4. Enhances pancreatic beta-cell proliferation by converging with signaling by STAT5B and STAT3. ICA512-CCF located in the cytoplasm regulates dynamics and exocytosis of insulin secretory granules (SGs) by dimerizing with ICA512-TMF and displacing SNTB2 thus enhancing SGs mobility and exocytosis. The protein is Receptor-type tyrosine-protein phosphatase-like N (Ptprn) of Mus musculus (Mouse).